Here is a 343-residue protein sequence, read N- to C-terminus: N-acetyl-gamma-glutamyl-phosphate reductase (343 aa).

The active site involves Cys-146.

The protein belongs to the NAGSA dehydrogenase family. Type 1 subfamily.

The protein resides in the cytoplasm. The catalysed reaction is N-acetyl-L-glutamate 5-semialdehyde + phosphate + NADP(+) = N-acetyl-L-glutamyl 5-phosphate + NADPH + H(+). The protein operates within amino-acid biosynthesis; L-arginine biosynthesis; N(2)-acetyl-L-ornithine from L-glutamate: step 3/4. Its function is as follows. Catalyzes the NADPH-dependent reduction of N-acetyl-5-glutamyl phosphate to yield N-acetyl-L-glutamate 5-semialdehyde. The polypeptide is N-acetyl-gamma-glutamyl-phosphate reductase (Acidothermus cellulolyticus (strain ATCC 43068 / DSM 8971 / 11B)).